The sequence spans 300 residues: Ribosomal protein bS6--L-glutamate ligase (300 aa).

The region spanning 104–287 (MQLLARQGID…IAGKMIRWIE (184 aa)) is the ATP-grasp domain. ATP-binding positions include Lys141, 178–179 (EY), Asp187, and 211–213 (RSN). Mg(2+)-binding residues include Asp248, Glu260, and Asn262. Mn(2+)-binding residues include Asp248, Glu260, and Asn262.

Belongs to the RimK family. The cofactor is Mg(2+). Requires Mn(2+) as cofactor.

An L-glutamate ligase that catalyzes the ATP-dependent post-translational addition of glutamate residues to the C-terminus of ribosomal protein bS6 (RpsF). Is also able to catalyze the synthesis of poly-alpha-glutamate in vitro, via ATP hydrolysis from unprotected glutamate as substrate. The number of glutamate residues added to either RpsF or to poly-alpha-glutamate changes with pH. This chain is Ribosomal protein bS6--L-glutamate ligase, found in Shigella boydii serotype 18 (strain CDC 3083-94 / BS512).